We begin with the raw amino-acid sequence, 240 residues long: Lipoprotein-releasing system ATP-binding protein LolD (240 aa).

The region spanning 15–240 (IRAESLGKTY…GLRELTSAEV (226 aa)) is the ABC transporter domain. 51 to 58 (GASGAGKS) contributes to the ATP binding site.

This sequence belongs to the ABC transporter superfamily. Lipoprotein translocase (TC 3.A.1.125) family. In terms of assembly, the complex is composed of two ATP-binding proteins (LolD) and two transmembrane proteins (LolC and LolE).

It is found in the cell inner membrane. Functionally, part of the ABC transporter complex LolCDE involved in the translocation of mature outer membrane-directed lipoproteins, from the inner membrane to the periplasmic chaperone, LolA. Responsible for the formation of the LolA-lipoprotein complex in an ATP-dependent manner. The chain is Lipoprotein-releasing system ATP-binding protein LolD from Xylella fastidiosa (strain Temecula1 / ATCC 700964).